Consider the following 170-residue polypeptide: Shikimate kinase (170 aa).

15 to 20 (GAGKTT) lines the ATP pocket. Threonine 19 serves as a coordination point for Mg(2+). Substrate contacts are provided by aspartate 37, arginine 61, and glycine 83. Residue arginine 121 participates in ATP binding. A substrate-binding site is contributed by arginine 140.

This sequence belongs to the shikimate kinase family. In terms of assembly, monomer. Mg(2+) serves as cofactor.

It is found in the cytoplasm. It catalyses the reaction shikimate + ATP = 3-phosphoshikimate + ADP + H(+). The protein operates within metabolic intermediate biosynthesis; chorismate biosynthesis; chorismate from D-erythrose 4-phosphate and phosphoenolpyruvate: step 5/7. In terms of biological role, catalyzes the specific phosphorylation of the 3-hydroxyl group of shikimic acid using ATP as a cosubstrate. The polypeptide is Shikimate kinase (Neisseria gonorrhoeae (strain ATCC 700825 / FA 1090)).